The following is a 43-amino-acid chain: Protein PsbN (43 aa).

Residues 5 to 27 traverse the membrane as a helical segment; it reads TLVAIFISCLLVSFTGYAPYTAS.

It belongs to the PsbN family.

It is found in the plastid. It localises to the chloroplast thylakoid membrane. Functionally, may play a role in photosystem I and II biogenesis. The chain is Protein PsbN from Anthoceros angustus (Hornwort).